The sequence spans 184 residues: Type-1 fimbrial protein, A chain (184 aa).

An N-terminal signal peptide occupies residues 1–23; that stretch reads MKIKTLAIVVLSALSLSSTAALA. Cys46 and Cys86 are disulfide-bonded.

This sequence belongs to the fimbrial protein family.

The protein localises to the fimbrium. In terms of biological role, fimbriae (also called pili), polar filaments radiating from the surface of the bacterium to a length of 0.5-1.5 micrometers and numbering 100-300 per cell, enable bacteria to colonize the epithelium of specific host organs. The protein is Type-1 fimbrial protein, A chain of Escherichia coli.